The sequence spans 658 residues: Translation factor GUF1, mitochondrial (658 aa).

A mitochondrion-targeting transit peptide spans 1 to 40 (MRGCLQTVRWLTSAWQRPPSYPPLSRAAPCRFFNVSIPRN). The region spanning 60–240 (DRFRNFCIVA…TVVEQIPAPV (181 aa)) is the tr-type G domain. Residues 69–76 (AHVDHGKS), 133–137 (DTPGH), and 187–190 (NKVD) each bind GTP.

It belongs to the TRAFAC class translation factor GTPase superfamily. Classic translation factor GTPase family. LepA subfamily.

It localises to the mitochondrion inner membrane. The catalysed reaction is GTP + H2O = GDP + phosphate + H(+). Functionally, promotes mitochondrial protein synthesis. May act as a fidelity factor of the translation reaction, by catalyzing a one-codon backward translocation of tRNAs on improperly translocated ribosomes. Binds to mitochondrial ribosomes in a GTP-dependent manner. This Paracoccidioides brasiliensis (strain Pb18) protein is Translation factor GUF1, mitochondrial.